The following is a 449-amino-acid chain: Deoxyguanosinetriphosphate triphosphohydrolase-like protein (449 aa).

The disordered stretch occupies residues 1 to 27 (MTSSVWQERRHGEDKQRRNDHRSPYQR). Positions 7–27 (QERRHGEDKQRRNDHRSPYQR) are enriched in basic and acidic residues. Residues 59–255 (RLTHSLEVSQ…MELADDIAYA (197 aa)) form the HD domain.

The protein belongs to the dGTPase family. Type 2 subfamily.

The polypeptide is Deoxyguanosinetriphosphate triphosphohydrolase-like protein (Shewanella baltica (strain OS223)).